Here is a 292-residue protein sequence, read N- to C-terminus: Acetyl-coenzyme A carboxylase carboxyl transferase subunit beta (292 aa).

The region spanning 29–292 (LWVKCSECGQ…HGVKDLMGAN (264 aa)) is the CoA carboxyltransferase N-terminal domain. Residues cysteine 33, cysteine 36, cysteine 52, and cysteine 55 each contribute to the Zn(2+) site. The C4-type zinc-finger motif lies at 33–55 (CSECGQVAYRKDLISNFNVCSNC).

The protein belongs to the AccD/PCCB family. Acetyl-CoA carboxylase is a heterohexamer composed of biotin carboxyl carrier protein (AccB), biotin carboxylase (AccC) and two subunits each of ACCase subunit alpha (AccA) and ACCase subunit beta (AccD). Requires Zn(2+) as cofactor.

It localises to the cytoplasm. The enzyme catalyses N(6)-carboxybiotinyl-L-lysyl-[protein] + acetyl-CoA = N(6)-biotinyl-L-lysyl-[protein] + malonyl-CoA. It functions in the pathway lipid metabolism; malonyl-CoA biosynthesis; malonyl-CoA from acetyl-CoA: step 1/1. Its function is as follows. Component of the acetyl coenzyme A carboxylase (ACC) complex. Biotin carboxylase (BC) catalyzes the carboxylation of biotin on its carrier protein (BCCP) and then the CO(2) group is transferred by the transcarboxylase to acetyl-CoA to form malonyl-CoA. This Prochlorococcus marinus (strain MIT 9515) protein is Acetyl-coenzyme A carboxylase carboxyl transferase subunit beta.